Here is a 205-residue protein sequence, read N- to C-terminus: Holliday junction branch migration complex subunit RuvA (205 aa).

The tract at residues 1 to 64 (MIGKLKGLID…EDQIKLFGFR (64 aa)) is domain I. A domain II region spans residues 65–143 (SDLEREWFRL…AFASVDPAVV (79 aa)). A flexible linker region spans residues 144–153 (ALSGALDERS). Positions 153 to 205 (SAPRPVTDAISALVNLGYGQPQAAAAIASASRSAGEGAETAQLIKLGLKELSK) are domain III.

The protein belongs to the RuvA family. As to quaternary structure, homotetramer. Forms an RuvA(8)-RuvB(12)-Holliday junction (HJ) complex. HJ DNA is sandwiched between 2 RuvA tetramers; dsDNA enters through RuvA and exits via RuvB. An RuvB hexamer assembles on each DNA strand where it exits the tetramer. Each RuvB hexamer is contacted by two RuvA subunits (via domain III) on 2 adjacent RuvB subunits; this complex drives branch migration. In the full resolvosome a probable DNA-RuvA(4)-RuvB(12)-RuvC(2) complex forms which resolves the HJ.

The protein localises to the cytoplasm. The RuvA-RuvB-RuvC complex processes Holliday junction (HJ) DNA during genetic recombination and DNA repair, while the RuvA-RuvB complex plays an important role in the rescue of blocked DNA replication forks via replication fork reversal (RFR). RuvA specifically binds to HJ cruciform DNA, conferring on it an open structure. The RuvB hexamer acts as an ATP-dependent pump, pulling dsDNA into and through the RuvAB complex. HJ branch migration allows RuvC to scan DNA until it finds its consensus sequence, where it cleaves and resolves the cruciform DNA. In Rhodopseudomonas palustris (strain BisB18), this protein is Holliday junction branch migration complex subunit RuvA.